The following is a 160-amino-acid chain: Phosphopantetheine adenylyltransferase (160 aa).

A substrate-binding site is contributed by Ser-9. Residues 9 to 10 (SF) and His-17 each bind ATP. The substrate site is built by Lys-41, Ile-73, and Lys-87. Residues 88–90 (GLR), Glu-98, and 122–128 (YSFVSSS) contribute to the ATP site.

The protein belongs to the bacterial CoaD family. As to quaternary structure, homohexamer. Mg(2+) serves as cofactor.

The protein localises to the cytoplasm. It carries out the reaction (R)-4'-phosphopantetheine + ATP + H(+) = 3'-dephospho-CoA + diphosphate. It participates in cofactor biosynthesis; coenzyme A biosynthesis; CoA from (R)-pantothenate: step 4/5. In terms of biological role, reversibly transfers an adenylyl group from ATP to 4'-phosphopantetheine, yielding dephospho-CoA (dPCoA) and pyrophosphate. The sequence is that of Phosphopantetheine adenylyltransferase from Mycolicibacterium vanbaalenii (strain DSM 7251 / JCM 13017 / BCRC 16820 / KCTC 9966 / NRRL B-24157 / PYR-1) (Mycobacterium vanbaalenii).